Here is a 407-residue protein sequence, read N- to C-terminus: Phosphopentomutase (407 aa).

Mn(2+)-binding residues include aspartate 11, aspartate 305, histidine 310, aspartate 346, histidine 347, and histidine 358.

It belongs to the phosphopentomutase family. Mn(2+) is required as a cofactor.

The protein resides in the cytoplasm. It carries out the reaction 2-deoxy-alpha-D-ribose 1-phosphate = 2-deoxy-D-ribose 5-phosphate. The catalysed reaction is alpha-D-ribose 1-phosphate = D-ribose 5-phosphate. It participates in carbohydrate degradation; 2-deoxy-D-ribose 1-phosphate degradation; D-glyceraldehyde 3-phosphate and acetaldehyde from 2-deoxy-alpha-D-ribose 1-phosphate: step 1/2. Isomerase that catalyzes the conversion of deoxy-ribose 1-phosphate (dRib-1-P) and ribose 1-phosphate (Rib-1-P) to deoxy-ribose 5-phosphate (dRib-5-P) and ribose 5-phosphate (Rib-5-P), respectively. The chain is Phosphopentomutase from Legionella pneumophila (strain Corby).